Here is a 102-residue protein sequence, read N- to C-terminus: RNA-binding protein Hfq (102 aa).

Residues 9 to 68 form the Sm domain; it reads DPFLNALRRERVPVSIYLVNGIKLQGQIESFDQFVILLKNTVSQMVYKHAISTVVPSRPV. The interval 63–102 is disordered; sequence VPSRPVSHHSNNAGGGSSNYHHGGSAQGSSAPQQDSDDAE. The segment covering 70 to 86 has biased composition (low complexity); sequence HHSNNAGGGSSNYHHGG.

It belongs to the Hfq family. In terms of assembly, homohexamer.

Functionally, RNA chaperone that binds small regulatory RNA (sRNAs) and mRNAs to facilitate mRNA translational regulation in response to envelope stress, environmental stress and changes in metabolite concentrations. Also binds with high specificity to tRNAs. The polypeptide is RNA-binding protein Hfq (Klebsiella pneumoniae (strain 342)).